The primary structure comprises 436 residues: Trigger factor (436 aa).

A PPIase FKBP-type domain is found at 161–246 (EDQLNIDFVG…VNSVSEPKLP (86 aa)).

The protein belongs to the FKBP-type PPIase family. Tig subfamily.

Its subcellular location is the cytoplasm. It carries out the reaction [protein]-peptidylproline (omega=180) = [protein]-peptidylproline (omega=0). Its function is as follows. Involved in protein export. Acts as a chaperone by maintaining the newly synthesized protein in an open conformation. Functions as a peptidyl-prolyl cis-trans isomerase. The chain is Trigger factor from Pseudomonas fluorescens (strain SBW25).